Reading from the N-terminus, the 287-residue chain is AA14 family lytic polysaccharide monooxygenase A (287 aa).

The signal sequence occupies residues 1-18 (MLRILTLSILATSKLASA). N-linked (GlcNAc...) asparagine glycans are attached at residues Asn33, Asn83, and Asn137. Intrachain disulfides connect Cys188-Cys193, Cys195-Cys216, and Cys236-Cys243. The N-linked (GlcNAc...) asparagine glycan is linked to Asn238.

The protein belongs to the polysaccharide monooxygenase AA14 family. Cu(2+) is required as a cofactor.

The protein resides in the secreted. Its function is as follows. Lytic polysaccharide monooxygenase (LPMO) that has a broad substrate specificity with strong oxidative activity on pure amorphous cellulose and xyloglucan and plays as a bifunctional enzyme to decompose some specific network structures formed between cellulose and hemicellulose in the plant cell walls. Catalysis by LPMOs requires the reduction of the active-site copper from Cu(II) to Cu(I) by a reducing agent and H(2)O(2) or O(2) as a cosubstrate. Simultaneously oxidizes cellulose, xylan and xyloglucan in natural hemi/cellulosic substrate such as fibrillated eucalyptus pulp, and releases native and oxidized cello-oligosaccharides, xylo-oligosaccharides and xyloglucan oligosaccharides from this substrate. The cellulolytic/hemicellulolytic activity becomes weaker as the contents of xylan increase in the alkaline-extracted hemi/cellulosic substrates. This is AA14 family lytic polysaccharide monooxygenase A from Talaromyces rugulosus (Penicillium rugulosum).